Consider the following 160-residue polypeptide: Protransforming growth factor alpha (160 aa).

An N-terminal signal peptide occupies residues 1–23 (MVPSAGQLALFALGIVLAACQAL). A propeptide spans 24-39 (ENSTSPLSADPPVAAA) (removed in mature form). The Extracellular portion of the chain corresponds to 24 to 98 (ENSTSPLSAD…AVVAASQKKQ (75 aa)). Residue N25 is glycosylated (N-linked (GlcNAc...) asparagine). The EGF-like domain maps to 43–83 (HFNDCPDSHTQFCFHGTCRFLVQEDKPACVCHSGYVGARCE). 3 disulfide bridges follow: C47/C60, C55/C71, and C73/C82. The propeptide at 90-160 (VVAASQKKQA…TACCHSETVV (71 aa)) is removed in mature form. A helical transmembrane segment spans residues 99 to 124 (AITALVVVSIVALAVLIITCVLIHCC). Residues 125-160 (QVRKHCEWCRALICRHEKPSALLKGRTACCHSETVV) lie on the Cytoplasmic side of the membrane. Residues C153 and C154 are each lipidated (S-palmitoyl cysteine).

Interacts with the PDZ domains of MAGI3, SDCBP and SNTA1. The interaction with SDCBP, is required for the targeting to the cell surface. In the endoplasmic reticulum, in its immature form (i.e. with a prosegment and lacking full N-glycosylation), interacts with CNIH. In the Golgi apparatus, may form a complex with CNIH and GORASP2. Interacts (via cytoplasmic C-terminal domain) with NKD2. In terms of tissue distribution, isoform 1, isoform 3 and isoform 4 are expressed in keratinocytes and tumor-derived cell lines.

It is found in the secreted. It localises to the extracellular space. The protein localises to the cell membrane. TGF alpha is a mitogenic polypeptide that is able to bind to the EGF receptor/EGFR and to act synergistically with TGF beta to promote anchorage-independent cell proliferation in soft agar. This Homo sapiens (Human) protein is Protransforming growth factor alpha (TGFA).